The chain runs to 309 residues: Porphobilinogen deaminase (309 aa).

Cys-241 is modified (S-(dipyrrolylmethanemethyl)cysteine).

The protein belongs to the HMBS family. As to quaternary structure, monomer. It depends on dipyrromethane as a cofactor.

It carries out the reaction 4 porphobilinogen + H2O = hydroxymethylbilane + 4 NH4(+). It functions in the pathway porphyrin-containing compound metabolism; protoporphyrin-IX biosynthesis; coproporphyrinogen-III from 5-aminolevulinate: step 2/4. Tetrapolymerization of the monopyrrole PBG into the hydroxymethylbilane pre-uroporphyrinogen in several discrete steps. This chain is Porphobilinogen deaminase, found in Bacillus cereus (strain ZK / E33L).